The primary structure comprises 199 residues: Recombination protein RecR (199 aa).

A C4-type zinc finger spans residues cysteine 56–cysteine 71. The 96-residue stretch at threonine 79–proline 174 folds into the Toprim domain.

The protein belongs to the RecR family.

May play a role in DNA repair. It seems to be involved in an RecBC-independent recombinational process of DNA repair. It may act with RecF and RecO. This is Recombination protein RecR from Acidothermus cellulolyticus (strain ATCC 43068 / DSM 8971 / 11B).